The chain runs to 434 residues: Angio-associated migratory cell protein (434 aa).

The interval 1–63 is disordered; that stretch reads MESESESGAA…EEEEEEGNEE (63 aa). S20 carries the phosphoserine modification. The segment covering 39–62 has biased composition (acidic residues); sequence DPDDLAQEMEDVDFEEEEEEEGNE. WD repeat units follow at residues 89-129, 132-171, 173-212, 214-254, 258-299, 315-354, 356-395, and 398-433; these read LHSA…LLFE, GHKD…EVWS, EAGD…KTFQ, PNCP…HVLK, GHQG…GVFR, SESN…LRHQ, QHQS…LLTD, and GHTA…QRPD.

As to expression, expressed in metastatic melanoma, liver, skin, kidney, heart, lung, lymph node, skeletal muscle and brain, and also in A2058 melanoma cells and activated T-cells (at protein level). Expressed in blood vessels. Strongly expressed in endothelial cells, cytotrophoblasts, and poorly differentiated. colon adenocarcinoma cells found in lymphatics.

Its subcellular location is the cell membrane. It is found in the cytoplasm. Plays a role in angiogenesis and cell migration. In smooth muscle cell migration, may act through the RhoA pathway. The sequence is that of Angio-associated migratory cell protein (AAMP) from Homo sapiens (Human).